Reading from the N-terminus, the 217-residue chain is UPF0319 protein VP1009 (217 aa).

Positions 1–21 are cleaved as a signal peptide; that stretch reads MRLKTWIVAFFLGLFGTTVNA.

The protein belongs to the UPF0319 family.

This is UPF0319 protein VP1009 from Vibrio parahaemolyticus serotype O3:K6 (strain RIMD 2210633).